Consider the following 382-residue polypeptide: Queuine tRNA-ribosyltransferase (382 aa).

Asp94 functions as the Proton acceptor in the catalytic mechanism. Substrate contacts are provided by residues 94–98 (DSGGF), Asp148, Gln192, and Gly219. The interval 250 to 256 (GVGKPED) is RNA binding. The active-site Nucleophile is Asp269. An RNA binding; important for wobble base 34 recognition region spans residues 274 to 278 (TRNAR). 4 residues coordinate Zn(2+): Cys307, Cys309, Cys312, and His338.

This sequence belongs to the queuine tRNA-ribosyltransferase family. Homodimer. Within each dimer, one monomer is responsible for RNA recognition and catalysis, while the other monomer binds to the replacement base PreQ1. Zn(2+) serves as cofactor.

The enzyme catalyses 7-aminomethyl-7-carbaguanine + guanosine(34) in tRNA = 7-aminomethyl-7-carbaguanosine(34) in tRNA + guanine. The protein operates within tRNA modification; tRNA-queuosine biosynthesis. Catalyzes the base-exchange of a guanine (G) residue with the queuine precursor 7-aminomethyl-7-deazaguanine (PreQ1) at position 34 (anticodon wobble position) in tRNAs with GU(N) anticodons (tRNA-Asp, -Asn, -His and -Tyr). Catalysis occurs through a double-displacement mechanism. The nucleophile active site attacks the C1' of nucleotide 34 to detach the guanine base from the RNA, forming a covalent enzyme-RNA intermediate. The proton acceptor active site deprotonates the incoming PreQ1, allowing a nucleophilic attack on the C1' of the ribose to form the product. After dissociation, two additional enzymatic reactions on the tRNA convert PreQ1 to queuine (Q), resulting in the hypermodified nucleoside queuosine (7-(((4,5-cis-dihydroxy-2-cyclopenten-1-yl)amino)methyl)-7-deazaguanosine). In Haemophilus ducreyi (strain 35000HP / ATCC 700724), this protein is Queuine tRNA-ribosyltransferase.